The chain runs to 379 residues: ORC1-type DNA replication protein 2 (379 aa).

Residues 69–73 (TGKTT), tyrosine 211, and arginine 223 contribute to the ATP site.

This sequence belongs to the CDC6/cdc18 family. In terms of assembly, interacts with MCM. In terms of processing, autophosphorylated on a serine. Phosphorylation is inhibited by binding to MCM. Both single-stranded DNA and double-stranded DNA inhibit the phosphorylation reaction.

Functionally, involved in regulation of DNA replication. Dissociates the MCM complex and inhibits the MCM helicase activity, suggesting that it may function as a helicase loader. Binds to both specific and random double-stranded or single-stranded DNA. In Methanothermobacter thermautotrophicus (strain ATCC 29096 / DSM 1053 / JCM 10044 / NBRC 100330 / Delta H) (Methanobacterium thermoautotrophicum), this protein is ORC1-type DNA replication protein 2 (cdc6-2).